A 273-amino-acid polypeptide reads, in one-letter code: Dermonecrotic toxin LspaSicTox-alphaIA1ii (273 aa).

The active site involves His-5. The Mg(2+) site is built by Glu-25 and Asp-27. The active-site Nucleophile is the His-41. 2 disulfides stabilise this stretch: Cys-45-Cys-51 and Cys-47-Cys-190. Asp-85 lines the Mg(2+) pocket.

This sequence belongs to the arthropod phospholipase D family. Class II subfamily. It depends on Mg(2+) as a cofactor. As to expression, expressed by the venom gland.

The protein localises to the secreted. It catalyses the reaction an N-(acyl)-sphingosylphosphocholine = an N-(acyl)-sphingosyl-1,3-cyclic phosphate + choline. It carries out the reaction an N-(acyl)-sphingosylphosphoethanolamine = an N-(acyl)-sphingosyl-1,3-cyclic phosphate + ethanolamine. The enzyme catalyses a 1-acyl-sn-glycero-3-phosphocholine = a 1-acyl-sn-glycero-2,3-cyclic phosphate + choline. The catalysed reaction is a 1-acyl-sn-glycero-3-phosphoethanolamine = a 1-acyl-sn-glycero-2,3-cyclic phosphate + ethanolamine. Its function is as follows. Dermonecrotic toxins cleave the phosphodiester linkage between the phosphate and headgroup of certain phospholipids (sphingolipid and lysolipid substrates), forming an alcohol (often choline) and a cyclic phosphate. This toxin acts on sphingomyelin (SM). It may also act on ceramide phosphoethanolamine (CPE), lysophosphatidylcholine (LPC) and lysophosphatidylethanolamine (LPE), but not on lysophosphatidylserine (LPS), and lysophosphatidylglycerol (LPG). It acts by transphosphatidylation, releasing exclusively cyclic phosphate products as second products. Induces dermonecrosis, hemolysis, increased vascular permeability, edema, inflammatory response, and platelet aggregation. The chain is Dermonecrotic toxin LspaSicTox-alphaIA1ii from Loxosceles spadicea (Recluse spider).